The following is a 370-amino-acid chain: TD and POZ domain-containing protein 4 (370 aa).

The 131-residue stretch at 19–149 (KLCYRWTISN…DDKFTLLCKV (131 aa)) folds into the MATH domain. Residues 188 to 251 (TDCSLLVAGH…MMGFIYTGKV (64 aa)) enclose the BTB domain.

Belongs to the Tdpoz family.

The chain is TD and POZ domain-containing protein 4 from Mus musculus (Mouse).